The sequence spans 404 residues: MTVKTPVYLDYAATTPVDKRVAEKMIPYLTETFGNPASNSHAFGWEAEEAVEKARADIAALINADPKEIVFTSGATESDNLAIKGAANFYKTKGKHLITVKTEHKAVLDTMRELERQGFEVTYLGVQENGLIDLEELKAAIRDDTILISVMWANNEIGVVQDIPAIGEICRERKIVFHVDAAQACGKVPVDVEAAKIDLLSMSAHKVYGPKGIGALYVRRKPRVRLEAQMHGGGHERGFRSGTLPTHQIVGMGEAFRIAKEELEQDMAHYRKLRDIFLKGIEGIEEVYINGDLEHRAPNNLNVSFNFVEGESLIMAVKELAVSSGSACTSASLEPSYVLRALGRNDELAHSSLRITFGRMTTEEEVQFAAELIKSKIGKLRELSPLWEMFKDGIDLNSIEWAAH.

Residues 75 to 76 (AT), Asn155, Gln183, and 203 to 205 (SAH) contribute to the pyridoxal 5'-phosphate site. Position 206 is an N6-(pyridoxal phosphate)lysine (Lys206). Position 243 (Thr243) interacts with pyridoxal 5'-phosphate. Cys328 (cysteine persulfide intermediate) is an active-site residue. Cys328 is a binding site for [2Fe-2S] cluster.

The protein belongs to the class-V pyridoxal-phosphate-dependent aminotransferase family. NifS/IscS subfamily. In terms of assembly, homodimer. Forms a heterotetramer with IscU, interacts with other sulfur acceptors. Requires pyridoxal 5'-phosphate as cofactor.

The protein resides in the cytoplasm. It carries out the reaction (sulfur carrier)-H + L-cysteine = (sulfur carrier)-SH + L-alanine. Its pathway is cofactor biosynthesis; iron-sulfur cluster biosynthesis. Functionally, master enzyme that delivers sulfur to a number of partners involved in Fe-S cluster assembly, tRNA modification or cofactor biosynthesis. Catalyzes the removal of elemental sulfur atoms from cysteine to produce alanine. Functions as a sulfur delivery protein for Fe-S cluster synthesis onto IscU, an Fe-S scaffold assembly protein, as well as other S acceptor proteins. This chain is Cysteine desulfurase IscS, found in Neisseria meningitidis serogroup C / serotype 2a (strain ATCC 700532 / DSM 15464 / FAM18).